The chain runs to 402 residues: Elongation factor Tu (402 aa).

In terms of domain architecture, tr-type G spans K10–E212. Residues G19–T26 are G1. G19–T26 is a binding site for GTP. A Mg(2+)-binding site is contributed by T26. The segment at G60–A64 is G2. The segment at D81 to G84 is G3. Residues D81–H85 and N136–D139 each bind GTP. Residues N136 to D139 form a G4 region. The segment at S177–F179 is G5.

It belongs to the TRAFAC class translation factor GTPase superfamily. Classic translation factor GTPase family. EF-Tu/EF-1A subfamily. In terms of assembly, monomer.

It localises to the cytoplasm. The catalysed reaction is GTP + H2O = GDP + phosphate + H(+). Functionally, GTP hydrolase that promotes the GTP-dependent binding of aminoacyl-tRNA to the A-site of ribosomes during protein biosynthesis. In Aliarcobacter butzleri (strain RM4018) (Arcobacter butzleri), this protein is Elongation factor Tu.